A 454-amino-acid polypeptide reads, in one-letter code: tRNA modification GTPase MnmE (454 aa).

The (6S)-5-formyl-5,6,7,8-tetrahydrofolate site is built by Arg23, Glu80, and Lys120. A TrmE-type G domain is found at 216–377 (GMKVVIAGRP…LRNHLKQSMG (162 aa)). Asn226 lines the K(+) pocket. Residues 226–231 (NAGKSS), 245–251 (TDIAGTT), 270–273 (DTAG), 335–338 (NKAD), and 358–360 (SAR) contribute to the GTP site. Position 230 (Ser230) interacts with Mg(2+). Residues Thr245, Ile247, and Thr250 each coordinate K(+). Thr251 provides a ligand contact to Mg(2+). Lys454 is a (6S)-5-formyl-5,6,7,8-tetrahydrofolate binding site.

The protein belongs to the TRAFAC class TrmE-Era-EngA-EngB-Septin-like GTPase superfamily. TrmE GTPase family. In terms of assembly, homodimer. Heterotetramer of two MnmE and two MnmG subunits. K(+) is required as a cofactor.

It localises to the cytoplasm. Functionally, exhibits a very high intrinsic GTPase hydrolysis rate. Involved in the addition of a carboxymethylaminomethyl (cmnm) group at the wobble position (U34) of certain tRNAs, forming tRNA-cmnm(5)s(2)U34. The chain is tRNA modification GTPase MnmE from Shigella flexneri serotype 5b (strain 8401).